The primary structure comprises 159 residues: Ubiquitin-like protein ATG12 (159 aa).

Positions 1-40 (MASPQPPFGGGSNSNSNTASPSNNLSPTASPLLEGRDSPN) are disordered. The span at 13-27 (NSNSNTASPSNNLSP) shows a compositional bias: low complexity. A Glycyl lysine isopeptide (Gly-Lys) (interchain with K-218 in ATG5) cross-link involves residue G159.

It belongs to the ATG12 family. As to quaternary structure, forms a conjugate with ATG5. Forms a thioester bond with the 'Cys-116' of ATG10. Interacts with the ATG7 C-terminal 40 amino acids domain. The ATG12-ATG5 conjugate forms a complex with several units of ATG16. The ATG12-ATG5 conjugate also associates with ATG3.

The protein resides in the preautophagosomal structure membrane. Its subcellular location is the cytoplasm. Ubiquitin-like protein involved in cytoplasm to vacuole transport (Cvt), autophagy vesicles formation, mitophagy, and nucleophagy. Conjugation with ATG5 through a ubiquitin-like conjugating system involving also ATG7 as an E1-like activating enzyme and ATG10 as an E2-like conjugating enzyme, is essential for its function. The ATG12-ATG5 conjugate acts as an E3-like enzyme which is required for lipidation of ATG8 and ATG8 association to the vesicle membranes. ATG12-ATG5 rearranges the ATG3 catalytic center and enhances its E2 activity. Plays a role in sexual development and perithecia formation. This is Ubiquitin-like protein ATG12 from Sordaria macrospora (strain ATCC MYA-333 / DSM 997 / K(L3346) / K-hell).